A 307-amino-acid polypeptide reads, in one-letter code: UDP-N-acetylenolpyruvoylglucosamine reductase (307 aa).

The FAD-binding PCMH-type domain occupies 27 to 193 (RVGGPADVVF…LDAVFEGLAD (167 aa)). Arginine 172 is an active-site residue. Serine 222 serves as the catalytic Proton donor. Glutamate 299 is a catalytic residue.

This sequence belongs to the MurB family. FAD is required as a cofactor.

Its subcellular location is the cytoplasm. It catalyses the reaction UDP-N-acetyl-alpha-D-muramate + NADP(+) = UDP-N-acetyl-3-O-(1-carboxyvinyl)-alpha-D-glucosamine + NADPH + H(+). Its pathway is cell wall biogenesis; peptidoglycan biosynthesis. In terms of biological role, cell wall formation. The polypeptide is UDP-N-acetylenolpyruvoylglucosamine reductase (Caulobacter sp. (strain K31)).